Here is a 335-residue protein sequence, read N- to C-terminus: Beta-ketoacyl-[acyl-carrier-protein] synthase III (335 aa).

Active-site residues include cysteine 116 and histidine 256. The segment at 257-261 (QANLR) is ACP-binding. The active site involves asparagine 286.

The protein belongs to the thiolase-like superfamily. FabH family. In terms of assembly, homodimer.

Its subcellular location is the cytoplasm. It catalyses the reaction malonyl-[ACP] + acetyl-CoA + H(+) = 3-oxobutanoyl-[ACP] + CO2 + CoA. It functions in the pathway lipid metabolism; fatty acid biosynthesis. Its function is as follows. Catalyzes the condensation reaction of fatty acid synthesis by the addition to an acyl acceptor of two carbons from malonyl-ACP. Catalyzes the first condensation reaction which initiates fatty acid synthesis and may therefore play a role in governing the total rate of fatty acid production. Possesses both acetoacetyl-ACP synthase and acetyl transacylase activities. Its substrate specificity determines the biosynthesis of branched-chain and/or straight-chain of fatty acids. The protein is Beta-ketoacyl-[acyl-carrier-protein] synthase III of Porphyromonas gingivalis (strain ATCC 33277 / DSM 20709 / CIP 103683 / JCM 12257 / NCTC 11834 / 2561).